Here is a 295-residue protein sequence, read N- to C-terminus: Nucleotide-binding protein BPUM_3115 (295 aa).

Residue 16 to 23 (GMSGAGKT) participates in ATP binding. 67 to 70 (DLRG) is a GTP binding site.

The protein belongs to the RapZ-like family.

Its function is as follows. Displays ATPase and GTPase activities. This chain is Nucleotide-binding protein BPUM_3115, found in Bacillus pumilus (strain SAFR-032).